Reading from the N-terminus, the 368-residue chain is Quinolinate synthase (368 aa).

Positions 46 and 63 each coordinate iminosuccinate. Cys110 contacts [4Fe-4S] cluster. Iminosuccinate contacts are provided by residues 141 to 143 and Ser162; that span reads YVN. A [4Fe-4S] cluster-binding site is contributed by Cys230. Iminosuccinate contacts are provided by residues 256 to 258 and Thr273; that span reads HPE. Cys320 contributes to the [4Fe-4S] cluster binding site.

Belongs to the quinolinate synthase family. Type 3 subfamily. It depends on [4Fe-4S] cluster as a cofactor.

It localises to the cytoplasm. It catalyses the reaction iminosuccinate + dihydroxyacetone phosphate = quinolinate + phosphate + 2 H2O + H(+). Its pathway is cofactor biosynthesis; NAD(+) biosynthesis; quinolinate from iminoaspartate: step 1/1. Functionally, catalyzes the condensation of iminoaspartate with dihydroxyacetone phosphate to form quinolinate. The polypeptide is Quinolinate synthase (Bacillus cereus (strain ATCC 10987 / NRS 248)).